The following is a 94-amino-acid chain: Integration host factor subunit beta (94 aa).

Belongs to the bacterial histone-like protein family. As to quaternary structure, heterodimer of an alpha and a beta chain.

Functionally, this protein is one of the two subunits of integration host factor, a specific DNA-binding protein that functions in genetic recombination as well as in transcriptional and translational control. This is Integration host factor subunit beta from Nitrosospira multiformis (strain ATCC 25196 / NCIMB 11849 / C 71).